The sequence spans 67 residues: MKTFALQGDTLDAICVRYYGRTEGVVETVLAANPGLAELGAVLPHGTAVELPDVQTAPVAETVNLWE.

The protein localises to the virion. In terms of biological role, might be involved in the peptidoglycan digestion during virus entry into the host cell. The sequence is that of Baseplate protein X (X) from Escherichia phage P2 (Bacteriophage P2).